Here is a 362-residue protein sequence, read N- to C-terminus: MAGETTKLDLSVKAIGWGAADASGVLQPIRFYRRAPGERDVKIRVLYCGVCNFDMEMVRNKWGFTRYPYVFGHETAGEVVEVGKKVEKFKVGDKVGVGCMVGSCGKCFHCQNEMENYCPEPNLADGSTYREEGERSYGGCSNVMVVDEKFVLRWPENLPQDKGVPLLCAGVVVYSPMKYMGFDKPGKHIGVFGLGGLGSIAVKFIKAFGGKATVISTSRRKEKEAIEEHGADAFVVNTDSEQLKALEGTMDGVVDTTPGGRTPMPLMLNLVKFDGAVILVGAPETLFELPLEPMGRKKIIGSSTGGLKEYQEVLDIAAKHNIVCDTEVIGIDYLSTAMERIKNLDVKYRFAIDIGNTLKFEE.

The Zn(2+) site is built by Cys51, His73, Cys104, Cys107, Cys110, Cys118, and Cys168. His73 contacts substrate. NAD(+)-binding positions include Gly193–Gly198 and Val280–Ala282.

It belongs to the zinc-containing alcohol dehydrogenase family. Class-III subfamily. Homodimer. The cofactor is Zn(2+).

This is Alcohol dehydrogenase 13 from Catharanthus roseus (Madagascar periwinkle).